Consider the following 483-residue polypeptide: Alginate biosynthesis protein AlgA (483 aa).

Belongs to the mannose-6-phosphate isomerase type 2 family. In terms of assembly, monomer. Requires Co(2+) as cofactor.

The catalysed reaction is D-mannose 6-phosphate = D-fructose 6-phosphate. It catalyses the reaction alpha-D-mannose 1-phosphate + GTP + H(+) = GDP-alpha-D-mannose + diphosphate. It participates in nucleotide-sugar biosynthesis; GDP-alpha-D-mannose biosynthesis; GDP-alpha-D-mannose from alpha-D-mannose 1-phosphate (GTP route): step 1/1. The protein operates within nucleotide-sugar biosynthesis; GDP-alpha-D-mannose biosynthesis; alpha-D-mannose 1-phosphate from D-fructose 6-phosphate: step 1/2. Produces a precursor for alginate polymerization. The alginate layer provides a protective barrier against host immune defenses and antibiotics. This Pseudomonas syringae pv. tomato (strain ATCC BAA-871 / DC3000) protein is Alginate biosynthesis protein AlgA (algA).